The sequence spans 364 residues: UDP-N-acetylglucosamine--N-acetylmuramyl-(pentapeptide) pyrophosphoryl-undecaprenol N-acetylglucosamine transferase (364 aa).

Residues 10–12 (TGG), Asn-124, Arg-166, Ser-196, and Gln-297 each bind UDP-N-acetyl-alpha-D-glucosamine.

The protein belongs to the glycosyltransferase 28 family. MurG subfamily.

Its subcellular location is the cell membrane. The catalysed reaction is di-trans,octa-cis-undecaprenyl diphospho-N-acetyl-alpha-D-muramoyl-L-alanyl-D-glutamyl-meso-2,6-diaminopimeloyl-D-alanyl-D-alanine + UDP-N-acetyl-alpha-D-glucosamine = di-trans,octa-cis-undecaprenyl diphospho-[N-acetyl-alpha-D-glucosaminyl-(1-&gt;4)]-N-acetyl-alpha-D-muramoyl-L-alanyl-D-glutamyl-meso-2,6-diaminopimeloyl-D-alanyl-D-alanine + UDP + H(+). It participates in cell wall biogenesis; peptidoglycan biosynthesis. Functionally, cell wall formation. Catalyzes the transfer of a GlcNAc subunit on undecaprenyl-pyrophosphoryl-MurNAc-pentapeptide (lipid intermediate I) to form undecaprenyl-pyrophosphoryl-MurNAc-(pentapeptide)GlcNAc (lipid intermediate II). The sequence is that of UDP-N-acetylglucosamine--N-acetylmuramyl-(pentapeptide) pyrophosphoryl-undecaprenol N-acetylglucosamine transferase from Thermoanaerobacter pseudethanolicus (strain ATCC 33223 / 39E) (Clostridium thermohydrosulfuricum).